Here is a 395-residue protein sequence, read N- to C-terminus: Putative 8-amino-7-oxononanoate synthase (395 aa).

Arg23 lines the substrate pocket. 110-111 (GY) contributes to the pyridoxal 5'-phosphate binding site. His135 is a substrate binding site. Pyridoxal 5'-phosphate-binding positions include Ser182, 207 to 210 (DEAH), and 239 to 242 (TFSK). Lys242 bears the N6-(pyridoxal phosphate)lysine mark. Thr356 is a binding site for substrate.

This sequence belongs to the class-II pyridoxal-phosphate-dependent aminotransferase family. BioF subfamily. As to quaternary structure, homodimer. Requires pyridoxal 5'-phosphate as cofactor.

The catalysed reaction is 6-carboxyhexanoyl-[ACP] + L-alanine + H(+) = (8S)-8-amino-7-oxononanoate + holo-[ACP] + CO2. It participates in cofactor biosynthesis; biotin biosynthesis. Catalyzes the decarboxylative condensation of pimeloyl-[acyl-carrier protein] and L-alanine to produce 8-amino-7-oxononanoate (AON), [acyl-carrier protein], and carbon dioxide. The sequence is that of Putative 8-amino-7-oxononanoate synthase (bioF) from Bacillus cereus (strain G9842).